Reading from the N-terminus, the 536-residue chain is MTKFIFVTGGVVSSLGKGITASSLGRLLKDRGLNVTIQKFDPYLNVDPGTMSPYQHGEVFVTDDGAETDLDLGHYERFIDINLNKFSNVTAGKVYSHVLKKERRGDYLGGTVQVIPHITNEIKERLLLAGESTNADVVITEIGGTTGDIESLPFIEAIRQIRSDLGRENVMYVHCTLLPYIKAAGEMKTKPTQHSVKELRGLGIQPDLIVVRTEYEMTQDLKDKIALFCDINKESVIECRDADSLYEIPLQLSQQNMDDIVIKRLQLNAKYETQLDEWKQLLDIVNNLDGKITIGLVGKYVSLQDAYLSVVESLKHAGYPFAKDIDIRWIDSSEVTDENAAEYLADVDGILVPGGFGFRASEGKISAIKYARENNVPFFGICLGMQLATVEFSRNVLGLEGAHSAELDPATPYPIIDLLPEQKDIEDLGGTLRLGLYSCSIKEGTLAQDVYGKAEIEERHRHRYEFNNDYREQLEANGMVISGTSPDGRLVEMVEIPTNDFFIACQFHPEFLSRPNRPHPIFKSFIEASLKYQQNK.

Residues methionine 1–leucine 267 form an amidoligase domain region. Position 13 (serine 13) interacts with CTP. Serine 13 is a binding site for UTP. Serine 14–isoleucine 19 provides a ligand contact to ATP. Position 54 (tyrosine 54) interacts with L-glutamine. Aspartate 71 is a binding site for ATP. Residues aspartate 71 and glutamate 141 each coordinate Mg(2+). Residues aspartate 148 to glutamate 150, lysine 188 to glutamine 193, and lysine 224 each bind CTP. UTP is bound by residues lysine 188–glutamine 193 and lysine 224. ATP is bound at residue arginine 240–alanine 242. One can recognise a Glutamine amidotransferase type-1 domain in the interval threonine 293–asparagine 535. L-glutamine is bound at residue glycine 355. Cysteine 382 (nucleophile; for glutamine hydrolysis) is an active-site residue. L-glutamine-binding positions include leucine 383–glutamine 386, glutamate 406, and arginine 463. Catalysis depends on residues histidine 508 and glutamate 510.

It belongs to the CTP synthase family. In terms of assembly, homotetramer.

It catalyses the reaction UTP + L-glutamine + ATP + H2O = CTP + L-glutamate + ADP + phosphate + 2 H(+). It carries out the reaction L-glutamine + H2O = L-glutamate + NH4(+). The catalysed reaction is UTP + NH4(+) + ATP = CTP + ADP + phosphate + 2 H(+). It functions in the pathway pyrimidine metabolism; CTP biosynthesis via de novo pathway; CTP from UDP: step 2/2. Its activity is regulated as follows. Allosterically activated by GTP, when glutamine is the substrate; GTP has no effect on the reaction when ammonia is the substrate. The allosteric effector GTP functions by stabilizing the protein conformation that binds the tetrahedral intermediate(s) formed during glutamine hydrolysis. Inhibited by the product CTP, via allosteric rather than competitive inhibition. In terms of biological role, catalyzes the ATP-dependent amination of UTP to CTP with either L-glutamine or ammonia as the source of nitrogen. Regulates intracellular CTP levels through interactions with the four ribonucleotide triphosphates. This chain is CTP synthase, found in Staphylococcus aureus (strain NCTC 8325 / PS 47).